The primary structure comprises 483 residues: tRNA sulfurtransferase (483 aa).

A THUMP domain is found at 61-165; the sequence is EAVCDALTRI…DDKLILVNAR (105 aa). Residues 183–184, Lys-265, Gly-287, and Gln-296 contribute to the ATP site; that span reads LI. Residues Cys-344 and Cys-456 are joined by a disulfide bond. Residues 404 to 483 enclose the Rhodanese domain; that stretch reads FATNDVVLDI…FNNVKVYRKK (80 aa). Cys-456 functions as the Cysteine persulfide intermediate in the catalytic mechanism.

The protein belongs to the ThiI family.

The protein localises to the cytoplasm. The catalysed reaction is [ThiI sulfur-carrier protein]-S-sulfanyl-L-cysteine + a uridine in tRNA + 2 reduced [2Fe-2S]-[ferredoxin] + ATP + H(+) = [ThiI sulfur-carrier protein]-L-cysteine + a 4-thiouridine in tRNA + 2 oxidized [2Fe-2S]-[ferredoxin] + AMP + diphosphate. The enzyme catalyses [ThiS sulfur-carrier protein]-C-terminal Gly-Gly-AMP + S-sulfanyl-L-cysteinyl-[cysteine desulfurase] + AH2 = [ThiS sulfur-carrier protein]-C-terminal-Gly-aminoethanethioate + L-cysteinyl-[cysteine desulfurase] + A + AMP + 2 H(+). It participates in cofactor biosynthesis; thiamine diphosphate biosynthesis. Functionally, catalyzes the ATP-dependent transfer of a sulfur to tRNA to produce 4-thiouridine in position 8 of tRNAs, which functions as a near-UV photosensor. Also catalyzes the transfer of sulfur to the sulfur carrier protein ThiS, forming ThiS-thiocarboxylate. This is a step in the synthesis of thiazole, in the thiamine biosynthesis pathway. The sulfur is donated as persulfide by IscS. The sequence is that of tRNA sulfurtransferase from Proteus mirabilis (strain HI4320).